Reading from the N-terminus, the 1022-residue chain is Histone-lysine N-methyltransferase TRX1 (1022 aa).

The segment at 31–151 is disordered; sequence SSAPCPLPKK…QRQGVHKEAA (121 aa). Residues 65–78 are compositionally biased toward pro residues; sequence EGPPPSPATAPPML. Basic and acidic residues predominate over residues 127–139; sequence GGAERRGYFSEPK. Positions 264–327 constitute a PWWP domain; sequence PGDLVWAKLT…LKQAVPFLNG (64 aa). The segment covering 367–393 has biased composition (basic and acidic residues); sequence SMEKGSSDANSNKDVHSCDNLSEDKTA. The disordered stretch occupies residues 367-399; the sequence is SMEKGSSDANSNKDVHSCDNLSEDKTAESGGDY. An FYR N-terminal domain is found at 402 to 461; sequence MTPIELGNLRVSKLGRIVTDSDYFHNKKHIWPEGYTAFRKFRSVKDPHVVILYKMEVLRN. In terms of domain architecture, FYR C-terminal spans 465–548; it reads KARPLFRVTS…SCLKYFENAG (84 aa). A Phorbol-ester/DAG-type zinc finger spans residues 553–609; it reads GYRAVHVNWKDLDYCSVCDMDEEYEDNLFLQCDKCRMMVHARCYGELEPLNGVLWLC. PHD-type zinc fingers lie at residues 564–615 and 677–744; these read LDYC…CRPE and LLCS…KKHR. The tract at residues 620–744 is extended PHD domain (ePHD); it reads SPRCCLCPVT…RLLSYCKKHR (125 aa). Residues 861-979 enclose the SET domain; that stretch reads RRLAFGKSRI…PWEELTYDYR (119 aa). Position 943 (Cys943) interacts with Zn(2+). S-adenosyl-L-methionine is bound at residue Tyr978. Residues 985–1001 enclose the Post-SET domain; the sequence is QRLPCYCGFPKCRGVVN. Residues Cys989, Cys991, and Cys996 each contribute to the Zn(2+) site.

Belongs to the class V-like SAM-binding methyltransferase superfamily. Histone-lysine methyltransferase family. TRX/MLL subfamily. Interacts with EHD3. Expressed in leaf blades and panicles.

Its subcellular location is the nucleus. It carries out the reaction L-lysyl(4)-[histone H3] + S-adenosyl-L-methionine = N(6)-methyl-L-lysyl(4)-[histone H3] + S-adenosyl-L-homocysteine + H(+). In terms of biological role, possesses histone H3 methyltransferase activity in vitro. Methylates 'Lys-4' of histone H3. H3 'Lys-4' methylation represents a specific tag for epigenetic transcriptional activation. Functions as a receptor for the lipid messenger phosphatidylinositol 5-phosphate (PI5P), which negatively regulates its transcriptional activation activity. Involved in the regulation of flowering time and floral induction under long day (LD) conditions. Acts as an activator of flowering under LD conditions. May function through binding to EHD3, a repressor of GHD7. The protein is Histone-lysine N-methyltransferase TRX1 of Oryza sativa subsp. japonica (Rice).